Reading from the N-terminus, the 320-residue chain is Cytochrome f (320 aa).

A signal peptide spans 1 to 35; it reads MQTINTFSWINQRITRSISVLLLVYIITRTSISSA. Heme contacts are provided by tyrosine 36, cysteine 56, cysteine 59, and histidine 60. Residues 286-306 form a helical membrane-spanning segment; that stretch reads VQGLLFFLASVILAQIFLVLK.

Belongs to the cytochrome f family. As to quaternary structure, the 4 large subunits of the cytochrome b6-f complex are cytochrome b6, subunit IV (17 kDa polypeptide, petD), cytochrome f and the Rieske protein, while the 4 small subunits are PetG, PetL, PetM and PetN. The complex functions as a dimer. Requires heme as cofactor.

It localises to the plastid thylakoid membrane. Its function is as follows. Component of the cytochrome b6-f complex, which mediates electron transfer between photosystem II (PSII) and photosystem I (PSI), cyclic electron flow around PSI, and state transitions. The polypeptide is Cytochrome f (Cuscuta exaltata (Tall dodder)).